Consider the following 864-residue polypeptide: Nitrate reductase [NADH] (864 aa).

C139 contributes to the Mo-molybdopterin binding site. The region spanning 497 to 572 is the Cytochrome b5 heme-binding domain; it reads PRQYTMEEVA…LAQYYIGDLV (76 aa). Heme contacts are provided by H532 and H555. In terms of domain architecture, FAD-binding FR-type spans 606–718; that stretch reads RQKVKLPLIE…KGPLGHFVYD (113 aa). FAD contacts are provided by residues 658–661, 675–679, F680, F687, 692–694, and T746; these read RAYT, LIKVY, and KMS.

Belongs to the nitrate reductase family. In terms of assembly, homodimer. FAD serves as cofactor. It depends on heme as a cofactor. The cofactor is Mo-molybdopterin.

It catalyses the reaction nitrite + NAD(+) + H2O = nitrate + NADH + H(+). Its function is as follows. Nitrate reductase is a key enzyme involved in the first step of nitrate assimilation in plants, fungi and bacteria. In Volvox carteri (Green alga), this protein is Nitrate reductase [NADH] (NITA).